We begin with the raw amino-acid sequence, 454 residues long: Probable tRNA methyltransferase 9B (454 aa).

S214 bears the Phosphoserine mark.

It belongs to the methyltransferase superfamily. As to expression, down-regulated in breast, bladder, colorectal, cervix and testicular carcinomas.

Its function is as follows. May modify wobble uridines in specific arginine and glutamic acid tRNAs. Acts as a tumor suppressor by promoting the expression of LIN9. The polypeptide is Probable tRNA methyltransferase 9B (Homo sapiens (Human)).